The following is a 378-amino-acid chain: Dual-specificity RNA methyltransferase RlmN 2 (378 aa).

The active-site Proton acceptor is the Glu113. Residues 119 to 355 form the Radical SAM core domain; sequence TEDRRTLCVS…AAYIRRNRGR (237 aa). A disulfide bridge connects residues Cys126 and Cys361. [4Fe-4S] cluster is bound by residues Cys133, Cys137, and Cys140. S-adenosyl-L-methionine contacts are provided by residues 188–189, Ser220, 242–244, and Asn318; these read GE and SLN. Cys361 functions as the S-methylcysteine intermediate in the catalytic mechanism.

Belongs to the radical SAM superfamily. RlmN family. It depends on [4Fe-4S] cluster as a cofactor.

The protein localises to the cytoplasm. It catalyses the reaction adenosine(2503) in 23S rRNA + 2 reduced [2Fe-2S]-[ferredoxin] + 2 S-adenosyl-L-methionine = 2-methyladenosine(2503) in 23S rRNA + 5'-deoxyadenosine + L-methionine + 2 oxidized [2Fe-2S]-[ferredoxin] + S-adenosyl-L-homocysteine. It carries out the reaction adenosine(37) in tRNA + 2 reduced [2Fe-2S]-[ferredoxin] + 2 S-adenosyl-L-methionine = 2-methyladenosine(37) in tRNA + 5'-deoxyadenosine + L-methionine + 2 oxidized [2Fe-2S]-[ferredoxin] + S-adenosyl-L-homocysteine. Its function is as follows. Specifically methylates position 2 of adenine 2503 in 23S rRNA and position 2 of adenine 37 in tRNAs. m2A2503 modification seems to play a crucial role in the proofreading step occurring at the peptidyl transferase center and thus would serve to optimize ribosomal fidelity. The chain is Dual-specificity RNA methyltransferase RlmN 2 from Myxococcus xanthus (strain DK1622).